The following is a 491-amino-acid chain: N-succinylglutamate 5-semialdehyde dehydrogenase (491 aa).

Residue 223–228 coordinates NAD(+); the sequence is GSANTG. Catalysis depends on residues Glu246 and Cys280.

Belongs to the aldehyde dehydrogenase family. AstD subfamily.

The enzyme catalyses N-succinyl-L-glutamate 5-semialdehyde + NAD(+) + H2O = N-succinyl-L-glutamate + NADH + 2 H(+). Its pathway is amino-acid degradation; L-arginine degradation via AST pathway; L-glutamate and succinate from L-arginine: step 4/5. In terms of biological role, catalyzes the NAD-dependent reduction of succinylglutamate semialdehyde into succinylglutamate. This chain is N-succinylglutamate 5-semialdehyde dehydrogenase, found in Photorhabdus laumondii subsp. laumondii (strain DSM 15139 / CIP 105565 / TT01) (Photorhabdus luminescens subsp. laumondii).